Consider the following 188-residue polypeptide: ATP synthase subunit p18, mitochondrial (188 aa).

The N-terminal 18 residues, 1-18, are a transit peptide targeting the mitochondrion; that stretch reads MMRRVYSPVFCSVAAARF. PPR repeat units follow at residues 36–70, 75–109, and 116–146; these read TNTAPWIEKIKKCKYYDEAGEVLVNMNVSNCPPDI, ATLQCIYQSPSKQSTPVDNESKFCAMMDLLEEMQH, and NEESWTWVMKECVKSGQFRLGYCIQQVMETE.

As to quaternary structure, F-type ATPases have 2 components, F(1) - the catalytic core - and F(o) - the membrane proton channel. F(1) has five subunits: alpha(3), beta(3), gamma(1), delta(1), epsilon(1), plus the additional subunit P18 (Tb427.05.1710) that is not present in F(1)F(o) ATP synthase from metazoa. Subunit P18 (Tb927.5.1710) interacts with the alpha subunit with a 1:1 stoichiometry; the interaction is direct. Subunit gamma is part of the central stalk. F(o) has three main subunits: a, b and c. The trypanosomal ATPase complex contains additional subunits that are not present in the F(1)F(o) ATP synthase from metazoa.

The protein localises to the mitochondrion. It is found in the mitochondrion inner membrane. In terms of biological role, mitochondrial membrane ATP synthase (F(1)F(o) ATP synthase) produces ATP from ADP in the presence of a proton gradient across the membrane which is generated by electron transport complexes of the respiratory chain. F-type ATPases consist of two structural domains, F(1) - containing the extramembraneous catalytic core, and F(o) - containing the membrane proton channel, linked together by a central stalk and a peripheral stalk. During catalysis, ATP synthesis in the catalytic domain of F(1) is coupled via a rotary mechanism of the central stalk subunits to proton translocation. Subunits alpha and beta form the catalytic core in F(1). Rotation of the central stalk against the surrounding alpha(3)beta(3) subunits leads to hydrolysis of ATP in three separate catalytic sites on the beta subunits. Contrary to the procyclic, insect form that requires F(1)F(o) ATP synthase for ATP synthesis, the bloodstream form relies on ATP hydrolysis by F(1)F(o) ATP synthase to maintain its mitochondrial membrane potential. This is ATP synthase subunit p18, mitochondrial from Trypanosoma brucei brucei.